The primary structure comprises 506 residues: Abscisic acid 8'-hydroxylase 2 (506 aa).

Residues 3–23 (FLLFFVFVTAAVLCFVVPAFL) form a helical membrane-spanning segment. Cys437 is a binding site for heme.

The protein belongs to the cytochrome P450 family. Requires heme as cofactor. In internodes and expanding leaves. Weak expression in seedlings.

Its subcellular location is the membrane. The catalysed reaction is 2-cis-(+)-abscisate + reduced [NADPH--hemoprotein reductase] + O2 = (+)-8'-hydroxyabscisate + oxidized [NADPH--hemoprotein reductase] + H2O + H(+). It participates in plant hormone degradation; abscisic acid degradation. Involved in the oxidative degradation of abscisic acid. The chain is Abscisic acid 8'-hydroxylase 2 (CYP707A6) from Oryza sativa subsp. indica (Rice).